Consider the following 367-residue polypeptide: Histidinol-phosphate aminotransferase (367 aa).

Position 221 is an N6-(pyridoxal phosphate)lysine (lysine 221).

It belongs to the class-II pyridoxal-phosphate-dependent aminotransferase family. Histidinol-phosphate aminotransferase subfamily. Homodimer. Pyridoxal 5'-phosphate is required as a cofactor.

The enzyme catalyses L-histidinol phosphate + 2-oxoglutarate = 3-(imidazol-4-yl)-2-oxopropyl phosphate + L-glutamate. It participates in amino-acid biosynthesis; L-histidine biosynthesis; L-histidine from 5-phospho-alpha-D-ribose 1-diphosphate: step 7/9. The sequence is that of Histidinol-phosphate aminotransferase from Erythrobacter litoralis (strain HTCC2594).